We begin with the raw amino-acid sequence, 815 residues long: uncharacterized protein (815 aa).

Positions 31–57 (CDMCRRKKIKCDGLRPCKNCKAGKLEC) form a DNA-binding region, zn(2)-C6 fungal-type. Residues 560 to 580 (YWTTVYCGFSTIVTLIFAALL) traverse the membrane as a helical segment. Disordered regions lie at residues 646–668 (ESNV…SNTQ) and 769–792 (DPDV…FNPT). Residues 780–792 (SSSLNNSTPFNPT) show a composition bias toward polar residues.

It is found in the cytoplasm. It localises to the nucleus membrane. This is an uncharacterized protein from Schizosaccharomyces pombe (strain 972 / ATCC 24843) (Fission yeast).